A 298-amino-acid polypeptide reads, in one-letter code: Rhodomycin D methylesterase DauP (298 aa).

Positions 25–277 (PLLLIAGGNL…VEIENMGHAL (253 aa)) constitute an AB hydrolase-1 domain.

Belongs to the methyl esterase DnrP family.

The catalysed reaction is rhodomycin D + H2O = 10-carboxy-13-deoxycarminomycin + methanol + H(+). The enzyme catalyses 4-O-methylrhodomycin D + H2O = 10-carboxy-13-deoxydaunorubicin + methanol + H(+). It participates in antibiotic biosynthesis; daunorubicin biosynthesis. The protein operates within antibiotic biosynthesis; carminomycin biosynthesis. Functionally, involved in the biosynthesis of the anthracyclines carminomycin and daunorubicin (daunomycin) which are aromatic polyketide antibiotics that exhibit high cytotoxicity and are widely applied in the chemotherapy of a variety of cancers. Catalyzes the removal of methyl group from the carbomethoxy group of rhodomycin D (10-carbomethoxy-13-deoxycarminomycin) and 4-O-methylrhodomycin D to yield 10-carboxy-13-deoxycarminomycin and 10-carboxy-13-deoxydaunorubicin, respectively. Could be also involved in the decarboxylation of 10-carboxy-13-deoxycarminomycin and 10-carboxy-13-deoxydaunorubicin to yield 13-deoxycarminomycin and 13-deoxydaunorubicin, respectively. It seems that DauK may influence the ability of DauP to carry out the decarboxylation. The chain is Rhodomycin D methylesterase DauP (dauP) from Streptomyces sp. (strain C5).